Reading from the N-terminus, the 118-residue chain is Ribosome-binding factor A (118 aa).

This sequence belongs to the RbfA family. In terms of assembly, monomer. Binds 30S ribosomal subunits, but not 50S ribosomal subunits or 70S ribosomes.

The protein localises to the cytoplasm. In terms of biological role, one of several proteins that assist in the late maturation steps of the functional core of the 30S ribosomal subunit. Associates with free 30S ribosomal subunits (but not with 30S subunits that are part of 70S ribosomes or polysomes). Required for efficient processing of 16S rRNA. May interact with the 5'-terminal helix region of 16S rRNA. In Shouchella clausii (strain KSM-K16) (Alkalihalobacillus clausii), this protein is Ribosome-binding factor A.